We begin with the raw amino-acid sequence, 358 residues long: N-acylethanolamine-hydrolyzing acid amidase (358 aa).

The N-terminal stretch at Met1 to Gly26 is a signal peptide. Asn39 and Asn108 each carry an N-linked (GlcNAc...) asparagine glycan. Cys127 (nucleophile) is an active-site residue. N-linked (GlcNAc...) asparagine glycosylation is found at Asn310, Asn334, and Asn356.

Belongs to the acid ceramidase family. Heterodimer of an alpha and a beta subunit, produced by autocatalytic cleavage. N-glycosylated. Tunicamycin treatment causes a reduction in specific activity against N-palmitoylethanolamine. Post-translationally, autoproteolytic cleavage at pH 4.5 gives rise to the alpha and beta subunit. Cleavage gives rise to a conformation change that activates the enzyme. The same catalytic Cys residue mediates the autoproteolytic cleavage and subsequent hydrolysis of lipid substrates.

Its subcellular location is the lysosome. The protein localises to the membrane. The catalysed reaction is N-hexadecanoylethanolamine + H2O = ethanolamine + hexadecanoate. It catalyses the reaction an N-(long-chain fatty acyl)ethanolamine + H2O = a long-chain fatty acid + ethanolamine. It carries out the reaction N-dodecanoylethanolamine + H2O = dodecanoate + ethanolamine. The enzyme catalyses N-tetradecanoylethanolamine + H2O = tetradecanoate + ethanolamine. The catalysed reaction is an N-acylsphing-4-enine + H2O = sphing-4-enine + a fatty acid. It catalyses the reaction N-hexadecanoylsphing-4-enine + H2O = sphing-4-enine + hexadecanoate. It carries out the reaction N-dodecanoylsphing-4-enine + H2O = dodecanoate + sphing-4-enine. It participates in lipid metabolism; fatty acid metabolism. Its function is as follows. Degrades bioactive fatty acid amides to their corresponding acids, with the following preference: N-palmitoylethanolamine &gt; N-myristoylethanolamine &gt; N-stearoylethanolamine &gt; N-oleoylethanolamine &gt; N-linoleoylethanolamine &gt; N-arachidonoylethanolamine. The sequence is that of N-acylethanolamine-hydrolyzing acid amidase from Oryctolagus cuniculus (Rabbit).